Consider the following 137-residue polypeptide: uncharacterized protein (137 aa).

The segment at 31 to 83 is disordered; the sequence is PASPINDKEKDKAGGRLPSGSEPRARAFCEAGADGEQGDPSPADTIKANQGHI.

This is an uncharacterized protein from Homo sapiens (Human).